Reading from the N-terminus, the 463-residue chain is 23S rRNA (uracil(1939)-C(5))-methyltransferase RlmD (463 aa).

One can recognise a TRAM domain in the interval 8-76 (RSKSATVYTF…KRFEEGELIE (69 aa)). 4 residues coordinate [4Fe-4S] cluster: C90, C96, C99, and C178. S-adenosyl-L-methionine-binding residues include Q288, F317, N322, E341, D368, and D389. Residue C415 is the Nucleophile of the active site.

The protein belongs to the class I-like SAM-binding methyltransferase superfamily. RNA M5U methyltransferase family. RlmD subfamily.

The catalysed reaction is uridine(1939) in 23S rRNA + S-adenosyl-L-methionine = 5-methyluridine(1939) in 23S rRNA + S-adenosyl-L-homocysteine + H(+). Functionally, catalyzes the formation of 5-methyl-uridine at position 1939 (m5U1939) in 23S rRNA. This chain is 23S rRNA (uracil(1939)-C(5))-methyltransferase RlmD, found in Acinetobacter baylyi (strain ATCC 33305 / BD413 / ADP1).